The following is a 773-amino-acid chain: 4'-phosphopantetheine phosphatase (773 aa).

N-acetylalanine is present on A2. Residues 2–402 (AECRASGGGS…APELCPTQRA (401 aa)) are pantothenate kinase. Acetyl-CoA contacts are provided by S196 and S199. Y320 is subject to 3'-nitrotyrosine. Residues 403-773 (RSGTFDLLEM…VIFKYEVPAE (371 aa)) are 4'-phosphopantetheine phosphatase. The residue at position 404 (S404) is a Phosphoserine. A Phosphothreonine modification is found at T406. Mn(2+)-binding residues include D623, N624, and D659. The short motif at 724 to 728 (EGMGR) is the Subfamily II EGMGR motif element.

It in the N-terminal section; belongs to the type II pantothenate kinase family. In the C-terminal section; belongs to the damage-control phosphatase family. Phosphopantetheine phosphatase (II) subfamily. Homodimer. Interacts with PKM. Mn(2+) serves as cofactor. Requires Ni(2+) as cofactor.

The protein resides in the cytoplasm. The enzyme catalyses (R)-4'-phosphopantetheine + H2O = (R)-pantetheine + phosphate. The catalysed reaction is (R)-4'-phosphopantetheine sulfonate + H2O = (R)-pantetheine sulfonate + phosphate. It carries out the reaction (R)-4'-phospho-S-sulfopantetheine + H2O = (R)-S-sulfopantetheine + phosphate. Activity is strongly promoted by Co(2+), Ni(2+), Mg(2+) and Mn(2+). Activity is inhibited by EDTA. Phosphatase which shows a preference for 4'-phosphopantetheine and its oxidatively damaged forms (sulfonate or S-sulfonate), providing strong indirect evidence that the phosphatase activity pre-empts damage in the coenzyme A (CoA) pathway. Hydrolyzing excess 4'-phosphopantetheine could constitute a directed overflow mechanism to prevent its oxidation to the S-sulfonate, sulfonate, or other forms. Hydrolyzing 4'-phosphopantetheine sulfonate or S-sulfonate would forestall their conversion to inactive forms of CoA and acyl carrier protein. May play a role in the physiological regulation of CoA intracellular levels. This chain is 4'-phosphopantetheine phosphatase, found in Rattus norvegicus (Rat).